The chain runs to 160 residues: Ribosomal RNA large subunit methyltransferase H (160 aa).

The disordered stretch occupies residues 44-63 (LPESRASNSATRKREEAVQI). S-adenosyl-L-methionine-binding positions include Leu76, Gly108, and 127–132 (LGKMTW).

This sequence belongs to the RNA methyltransferase RlmH family. As to quaternary structure, homodimer.

The protein localises to the cytoplasm. The catalysed reaction is pseudouridine(1915) in 23S rRNA + S-adenosyl-L-methionine = N(3)-methylpseudouridine(1915) in 23S rRNA + S-adenosyl-L-homocysteine + H(+). Its function is as follows. Specifically methylates the pseudouridine at position 1915 (m3Psi1915) in 23S rRNA. This Allorhizobium ampelinum (strain ATCC BAA-846 / DSM 112012 / S4) (Agrobacterium vitis (strain S4)) protein is Ribosomal RNA large subunit methyltransferase H.